The following is a 115-amino-acid chain: U3-lycotoxin-Ls1e (115 aa).

The N-terminal stretch at 1 to 20 is a signal peptide; the sequence is MKFVLLFGVLSLTLFSYSSA. Residues 21–44 constitute a propeptide that is removed on maturation; sequence EMLDDFDQADEDELLSLIEKEEAR. Disulfide bonds link C48–C63, C55–C72, C62–C87, and C74–C85.

The protein belongs to the neurotoxin 19 (CSTX) family. 01 subfamily. Expressed by the venom gland.

It localises to the secreted. This Lycosa singoriensis (Wolf spider) protein is U3-lycotoxin-Ls1e.